A 256-amino-acid chain; its full sequence is MNNIWWQTKGQGNVHLVLLHGWGLNAEVWRCIDEELSSHFTLHLVDLPGFGRSRGFGALSLADMAEAVLQQAPDKAIWLGWSLGGLVASQIALTHPERVQALVTVASSPCFSARDEWPGIKPDVLAGFQQQLSDDFQRTVERFLALQTMGTETARQDARALKKTVLALPMPEVDVLNGGLEILKTVDLRQPLQNVPMPFLRLYGYLDGLVPRKVVPMLDKLWPHSESYIFAKAAHAPFISHPVEFCHLLVALKQRV.

An AB hydrolase-1 domain is found at 15-242 (HLVLLHGWGL…AAHAPFISHP (228 aa)). Residues Trp22, 82 to 83 (SL), and 143 to 147 (FLALQ) contribute to the substrate site. Ser82 serves as the catalytic Nucleophile. Catalysis depends on residues Asp207 and His235. His235 contacts substrate.

It belongs to the AB hydrolase superfamily. Carboxylesterase BioH family. As to quaternary structure, monomer.

The protein localises to the cytoplasm. The enzyme catalyses 6-carboxyhexanoyl-[ACP] methyl ester + H2O = 6-carboxyhexanoyl-[ACP] + methanol + H(+). Its pathway is cofactor biosynthesis; biotin biosynthesis. Functionally, the physiological role of BioH is to remove the methyl group introduced by BioC when the pimeloyl moiety is complete. It allows to synthesize pimeloyl-ACP via the fatty acid synthetic pathway through the hydrolysis of the ester bonds of pimeloyl-ACP esters. The protein is Pimeloyl-[acyl-carrier protein] methyl ester esterase of Escherichia coli O139:H28 (strain E24377A / ETEC).